Consider the following 792-residue polypeptide: MITVNPDGKIMVRRCLVTLRPFRLFVLGIGFFTLCFLMTSLGGQFSARRLGDSPFTIRTEVPGSPESRGALRKMSDLLELMVKRMDMLARLENSSELHRTASVAHLAADRLTPGASLIERIQAIAQNVSDIAVKVDQILRHSLILHSKVSEGRRDQCEAPSDPKFPDCSGKVEWMRARWTSDPCYAFFGVDGTECSFLIYLSEVEWFCPPLPWRNQTAARTAPKSLPRVQAVFRSNLSHLLELMGSGKESLIFMKKRTRRFTAQWTKAAKYLAQKLGDIRRDQKQILVHIGFLTEESGDVFSPRVLKGGPLGEMVQWADILAALYVLGHSLRITVSLKELQSNLGVPPGRGNCPLTVPLPFDLIYTDYHGLQQMKQHMGLSFKKYRCRIRVIDTFGTEPAYNHEEYATLHGYRTNWGYWNLNPKQFMTMFPHTPDNSFMGFVSEELNETEKQLIKDGKASNMAVVYGKEASIWKLQGKEKFLAVLNKYMEIHGTVYYESQRPPEVPAFVKNHGLLPQPEFQQLLRKAKLFIGFGFPYEGPAPLEAIANGCIFLQSRFSPPHSSLNHEFFRGKPTSREVFSQHPYAENFIGKPHVWTVDYNNSDEFETAIKAIMNTQVDPYLPYEYTCAGMLERINAYIQHQDFCVGPSPLPPGASTAQSPFVLAPNATHLEWAQNISSVPGAWPPTHSLRAWLAAPGRACTDACLDHGLICEPSFFPFLNSQNSFLKLQVPCDSTEWEMHHLYPAFAQPGQECYLQKEPLLFSCAGASTKYQRLCPCRDFRKGQVALCQGCL.

The Cytoplasmic portion of the chain corresponds to 1–24 (MITVNPDGKIMVRRCLVTLRPFRL). Residues 25–45 (FVLGIGFFTLCFLMTSLGGQF) form a helical; Signal-anchor for type II membrane protein membrane-spanning segment. The Lumenal portion of the chain corresponds to 46–792 (SARRLGDSPF…GQVALCQGCL (747 aa)). Asn127 carries an N-linked (GlcNAc...) asparagine glycan. Cystine bridges form between Cys157/Cys195, Cys168/Cys208, Cys184/Cys353, and Cys387/Cys644. Asn675 is a glycosylation site (N-linked (GlcNAc...) asparagine). Intrachain disulfides connect Cys700/Cys775, Cys704/Cys777, Cys711/Cys764, Cys732/Cys753, and Cys788/Cys791.

This sequence belongs to the glycosyltransferase 18 family. Mn(2+) serves as cofactor. Present in brain (at protein level). Predominantly expressed in hippocampus, superficial layers of the brain cortex, striatum, nucleus accumbens, a subset of nuclei in the thalamus, inferior colliculus, brain stem and cerebellum.

Its subcellular location is the golgi apparatus membrane. The catalysed reaction is N(4)-{beta-D-GlcNAc-(1-&gt;2)-[beta-D-GlcNAc-(1-&gt;4)]-alpha-D-Man-(1-&gt;3)-[beta-D-GlcNAc-(1-&gt;2)-alpha-D-Man-(1-&gt;6)]-beta-D-Man-(1-&gt;4)-beta-D-GlcNAc-(1-&gt;4)-beta-D-GlcNAc}-L-asparaginyl-[protein] + UDP-N-acetyl-alpha-D-glucosamine = N(4)-{beta-D-GlcNAc-(1-&gt;2)-[beta-D-GlcNAc-(1-&gt;4)]-alpha-D-Man-(1-&gt;3)-[beta-D-GlcNAc-(1-&gt;2)-[beta-D-GlcNAc-(1-&gt;6)]-alpha-D-Man-(1-&gt;6)]-beta-D-Man-(1-&gt;4)-beta-D-GlcNAc-(1-&gt;4)-beta-D-GlcNAc}-L-asparaginyl-[protein] + UDP + H(+). It carries out the reaction 3-O-[N-acetyl-beta-D-glucosaminyl-(1-&gt;2)-alpha-D-mannosyl]-L-seryl-[protein] + UDP-N-acetyl-alpha-D-glucosamine = O(3)-{N-acetyl-beta-D-glucosaminyl-(1-&gt;2)-[N-acetyl-beta-D-glucosaminyl-(1-&gt;6)]-alpha-D-mannosyl}-L-seryl-[protein] + UDP + H(+). It catalyses the reaction 3-O-[N-acetyl-beta-D-glucosaminyl-(1-&gt;2)-alpha-D-mannosyl]-L-threonyl-[protein] + UDP-N-acetyl-alpha-D-glucosamine = O(3)-{N-acetyl-beta-D-glucosaminyl-(1-&gt;2)-[N-acetyl-beta-D-glucosaminyl-(1-&gt;6)]-alpha-D-mannosyl}-L-threonyl-[protein] + UDP + H(+). It participates in protein modification; protein glycosylation. Glycosyltransferase that acts on alpha-linked mannose of N-glycans and O-mannosyl glycans. Catalyzes the transfer of N-acetylglucosamine (GlcNAc) to the beta 1-6 linkage of the mannose residue of GlcNAc-beta1,2-Man-alpha on both the alpha1,3- and alpha1,6-linked mannose arms in the core structure of N-glycan. Also acts on the GlcNAc-beta1,2-Man-alpha1-Ser/Thr moiety, forming a 2,6-branched structure in brain O-mannosyl glycan. Plays an active role in modulating integrin and laminin-dependent adhesion and migration of neuronal cells via its activity in the O-mannosyl glycan pathway. The polypeptide is Alpha-1,6-mannosylglycoprotein 6-beta-N-acetylglucosaminyltransferase B (Mgat5b) (Mus musculus (Mouse)).